The chain runs to 245 residues: 1-(5-phosphoribosyl)-5-[(5-phosphoribosylamino)methylideneamino] imidazole-4-carboxamide isomerase (245 aa).

Asp8 serves as the catalytic Proton acceptor. Asp130 acts as the Proton donor in catalysis.

It belongs to the HisA/HisF family.

Its subcellular location is the cytoplasm. The enzyme catalyses 1-(5-phospho-beta-D-ribosyl)-5-[(5-phospho-beta-D-ribosylamino)methylideneamino]imidazole-4-carboxamide = 5-[(5-phospho-1-deoxy-D-ribulos-1-ylimino)methylamino]-1-(5-phospho-beta-D-ribosyl)imidazole-4-carboxamide. Its pathway is amino-acid biosynthesis; L-histidine biosynthesis; L-histidine from 5-phospho-alpha-D-ribose 1-diphosphate: step 4/9. The protein is 1-(5-phosphoribosyl)-5-[(5-phosphoribosylamino)methylideneamino] imidazole-4-carboxamide isomerase of Azotobacter vinelandii (strain DJ / ATCC BAA-1303).